The sequence spans 275 residues: Exosome complex component RRP40 (275 aa).

The residue at position 2 (Ala2) is an N-acetylalanine. Lys151 participates in a covalent cross-link: Glycyl lysine isopeptide (Lys-Gly) (interchain with G-Cter in SUMO2).

It belongs to the RRP40 family. Component of the RNA exosome core complex (Exo-9), composed of EXOSC1, EXOSC2, EXOSC3, EXOSC4, EXOSC5, EXOSC6, EXOSC7, EXOSC8 and EXOSC9; within the complex interacts with EXOSC5 and EXOSC9. The catalytically inactive RNA exosome core complex (Exo-9) associates with the catalytic subunit EXOSC10/RRP6. Exo-9 may associate with DIS3 to form the nucleolar exosome complex, or DIS3L to form the cytoplasmic exosome complex. Exo-9 is formed by a hexameric base ring consisting of the heterodimers EXOSC4-EXOSC9, EXOSC5-EXOSC8 and EXOSC6-EXOSC7, and a cap ring consisting of EXOSC1, EXOSC2 and EXOSC3. The RNA exosome complex associates with cofactors C1D/RRP47, MPHOSPH6/MPP6 and MTREX/MTR4. Interacts with MPHOSPH6/MPP6; the interaction is direct. Interacts with GTPBP1. Interacts with ZC3HAV1. Interacts with DDX17 only in the presence of ZC3HAV1 in an RNA-independent manner. Interacts with DHX36; this interaction occurs in a RNase-insensitive manner. Interacts with HBS1L isoform 2.

The protein resides in the cytoplasm. Its subcellular location is the nucleus. It localises to the nucleolus. In terms of biological role, non-catalytic component of the RNA exosome complex which has 3'-&gt;5' exoribonuclease activity and participates in a multitude of cellular RNA processing and degradation events. In the nucleus, the RNA exosome complex is involved in proper maturation of stable RNA species such as rRNA, snRNA and snoRNA, in the elimination of RNA processing by-products and non-coding 'pervasive' transcripts, such as antisense RNA species and promoter-upstream transcripts (PROMPTs), and of mRNAs with processing defects, thereby limiting or excluding their export to the cytoplasm. The RNA exosome may be involved in Ig class switch recombination (CSR) and/or Ig variable region somatic hypermutation (SHM) by targeting AICDA deamination activity to transcribed dsDNA substrates. In the cytoplasm, the RNA exosome complex is involved in general mRNA turnover and specifically degrades inherently unstable mRNAs containing AU-rich elements (AREs) within their 3' untranslated regions, and in RNA surveillance pathways, preventing translation of aberrant mRNAs. It seems to be involved in degradation of histone mRNA. The catalytic inactive RNA exosome core complex of 9 subunits (Exo-9) is proposed to play a pivotal role in the binding and presentation of RNA for ribonucleolysis, and to serve as a scaffold for the association with catalytic subunits and accessory proteins or complexes. EXOSC3 as peripheral part of the Exo-9 complex stabilizes the hexameric ring of RNase PH-domain subunits through contacts with EXOSC9 and EXOSC5. This Homo sapiens (Human) protein is Exosome complex component RRP40 (EXOSC3).